The primary structure comprises 542 residues: CTP synthase (542 aa).

The amidoligase domain stretch occupies residues 1–265; that stretch reads MARYVFITGG…DDEVLAAFGI (265 aa). Residue serine 13 coordinates CTP. Residue serine 13 coordinates UTP. Residues 14-19 and aspartate 71 contribute to the ATP site; that span reads SLGKGI. Residues aspartate 71 and glutamate 139 each coordinate Mg(2+). CTP-binding positions include 146–148, 186–191, and lysine 222; these read DIE and KTKPTQ. Residues 186–191 and lysine 222 each bind UTP; that span reads KTKPTQ. Residues 291-541 form the Glutamine amidotransferase type-1 domain; the sequence is TIAIVGKYTG…IEAATEQSRL (251 aa). L-glutamine is bound at residue glycine 353. Cysteine 380 (nucleophile; for glutamine hydrolysis) is an active-site residue. L-glutamine contacts are provided by residues 381–384, glutamate 404, and arginine 469; that span reads FGMQ. Residues histidine 514 and glutamate 516 contribute to the active site.

Belongs to the CTP synthase family. In terms of assembly, homotetramer.

The catalysed reaction is UTP + L-glutamine + ATP + H2O = CTP + L-glutamate + ADP + phosphate + 2 H(+). It catalyses the reaction L-glutamine + H2O = L-glutamate + NH4(+). The enzyme catalyses UTP + NH4(+) + ATP = CTP + ADP + phosphate + 2 H(+). It functions in the pathway pyrimidine metabolism; CTP biosynthesis via de novo pathway; CTP from UDP: step 2/2. With respect to regulation, allosterically activated by GTP, when glutamine is the substrate; GTP has no effect on the reaction when ammonia is the substrate. The allosteric effector GTP functions by stabilizing the protein conformation that binds the tetrahedral intermediate(s) formed during glutamine hydrolysis. Inhibited by the product CTP, via allosteric rather than competitive inhibition. Its function is as follows. Catalyzes the ATP-dependent amination of UTP to CTP with either L-glutamine or ammonia as the source of nitrogen. Regulates intracellular CTP levels through interactions with the four ribonucleotide triphosphates. This is CTP synthase from Rhizobium etli (strain ATCC 51251 / DSM 11541 / JCM 21823 / NBRC 15573 / CFN 42).